The primary structure comprises 437 residues: Elongation factor 1-gamma (437 aa).

Alanine 2 carries the N-acetylalanine modification. One can recognise a GST N-terminal domain in the interval 2 to 87 (AAGTLYTYPE…YVSNEELRGS (86 aa)). The 129-residue stretch at 88–216 (TPEAAAQVVQ…VKLCEKMAQF (129 aa)) folds into the GST C-terminal domain. Lysine 147 and lysine 212 each carry N6-acetyllysine. A compositionally biased stretch (basic and acidic residues) spans 221–254 (FAETQPKKDTPRKEKGSREEKQKPQAERKEEKKA). The segment at 221-268 (FAETQPKKDTPRKEKGSREEKQKPQAERKEEKKAAAPAPEEEMDECEQ) is disordered. Residue lysine 253 forms a Glycyl lysine isopeptide (Lys-Gly) (interchain with G-Cter in SUMO1) linkage. An EF-1-gamma C-terminal domain is found at 276–437 (AKDPFAHLPK…KAFNQGKIFK (162 aa)). A Glycyl lysine isopeptide (Lys-Gly) (interchain with G-Cter in SUMO2) cross-link involves residue lysine 285. N6-acetyllysine is present on lysine 401. At lysine 434 the chain carries N6-acetyllysine; alternate. Position 434 is an N6-malonyllysine; alternate (lysine 434).

As to quaternary structure, EF-1 is composed of four subunits: alpha, beta, delta, and gamma. Highly expressed in pancreatic tumor tissue and to a lesser extent in normal kidney, intestine, pancreas, stomach, lung, brain, spleen and liver.

In terms of biological role, probably plays a role in anchoring the complex to other cellular components. This chain is Elongation factor 1-gamma (EEF1G), found in Homo sapiens (Human).